The sequence spans 517 residues: MTKNIHDQRILILDFGSQYTQLVARRVREIGVYCELWSWDVEEADIREFNPDGIILSGGPESVTEENSPRAPQYVFDSGVPVLGVCYGMQTMAEQLGGKVAGSNEREFGYAQVKVSGESAIFKDLEATQDVWMSHGDKVVEIPADFVKVGETDTCPYAAMANEEKKYYGVQFHPEVTHTKGGLQMLENFVLGVCGCERLWTSESIIEDAVARIKEQVGDDEVILGLSGGVDSSVVAMLVHRAIGDKLTCVFVDNGLLRLNEGQQVMDMFGDKFGLNIIKVDAEERFLEALKGKSDPEEKRKTIGHVFVDVFDEESKKLKNAKWLAQGTIYPDVIESAASKTGKAHVIKSHHNVGGLPDDMEMGLVEPLRELFKDEVRKIGLELGLPYNMLYRHPFPGPGLGVRVLGEIKKEYCDLLRRADAIFIEELHAADLYDKVSQAFTVFLPVRSVGVMGDGRKYDWVVSLRAVETIDFMTAHWAHLPYDFLGKVSNRIINEVEGISRVVYDISGKPPATIEWE.

Residues Arg-9–Leu-199 form the Glutamine amidotransferase type-1 domain. Cys-86 (nucleophile) is an active-site residue. Active-site residues include His-173 and Glu-175. The region spanning Trp-200–Arg-392 is the GMPS ATP-PPase domain. Ser-227–Ser-233 lines the ATP pocket.

In terms of assembly, homodimer.

It catalyses the reaction XMP + L-glutamine + ATP + H2O = GMP + L-glutamate + AMP + diphosphate + 2 H(+). The protein operates within purine metabolism; GMP biosynthesis; GMP from XMP (L-Gln route): step 1/1. Catalyzes the synthesis of GMP from XMP. This Vibrio parahaemolyticus serotype O3:K6 (strain RIMD 2210633) protein is GMP synthase [glutamine-hydrolyzing].